The sequence spans 501 residues: Circadian clock oscillator protein KaiC (501 aa).

KaiC domains follow at residues 1–232 (MQVQ…ITVF) and 246–501 (IRIS…REKK). ATP contacts are provided by Gly34, Thr35, Gly36, Lys37, Thr38, Ser74, Lys209, Leu210, Arg211, Thr213, His215, Thr275, Gly276, Thr277, Gly278, Lys279, and Thr280. Thr38 contributes to the Mg(2+) binding site. Mg(2+) contacts are provided by Thr280 and Glu303. Trp316 provides a ligand contact to ATP. Ser416 carries the post-translational modification Phosphoserine; by autocatalysis. Phosphothreonine; by autocatalysis is present on Thr417. ATP contacts are provided by Arg436, Lys442, Met443, Arg444, Ser446, His448, and Lys450.

The protein belongs to the KaiC family. Homohexamer; hexamerization is dependent on ATP-binding. Component of the KaiBC complex. KaiC interacts with SasA, activating its autokinase function and leading to RpaA activation. Requires Mg(2+) as cofactor. Phosphorylated on serine and threonine residues by autocatalysis. Has a 4 step phosphorylation cycle; the autokinase acts first on Thr-417, then Ser-416. When Ser-416 is modified KaiC switches to an autophosphatase mode, acting first on phospho-Thr-417 then phospho-Ser-416.

It catalyses the reaction L-seryl-[protein] + ATP = O-phospho-L-seryl-[protein] + ADP + H(+). The catalysed reaction is L-threonyl-[protein] + ATP = O-phospho-L-threonyl-[protein] + ADP + H(+). It carries out the reaction ATP + H2O = ADP + phosphate + H(+). Functionally, central component of the KaiBC oscillator complex, which constitutes the main circadian regulator in cyanobacteria. Its composition changes during the circadian cycle to control KaiC phosphorylation. Autophosphorylates and has a weak ATPase activity; ATPase activity defines the circadian period. This Prochlorococcus marinus (strain SARG / CCMP1375 / SS120) protein is Circadian clock oscillator protein KaiC.